A 330-amino-acid polypeptide reads, in one-letter code: MTPSNMDDNTSGFMKFINPQCQEEDCCIRNSLFQEDSKCIKQQPDLLSEQTAPFPILEDQCPALNLDRSNNDLLLQNNISFPKGSDLQAIQLTPISGDYSTYVMADNNNNDNDSYSNTNYFSKNNGISPSSRSPSVAHNENVPDDSKAKKKAQNRAAQKAFRERKEARMKELQDKLLESERNRQSLLKEIEELRKANTEINAENRLLLRSGNENFSKDIEDDTNYKYSFPTKDEFFTSMVLESKLNHKGKYSLKDNEIMKRNTQYTDEAGRHVLTVPATWEYLYKLSEERDFDVTYVMSKLQGQECCHTHGPAYPRSLIDFLVEEATLNE.

Residues 114-150 (SYSNTNYFSKNNGISPSSRSPSVAHNENVPDDSKAKK) are disordered. Polar residues predominate over residues 121–138 (FSKNNGISPSSRSPSVAH). At Ser-135 the chain carries Phosphoserine. The bZIP domain maps to 144–207 (DDSKAKKKAQ…TEINAENRLL (64 aa)). The segment at 147–168 (KAKKKAQNRAAQKAFRERKEAR) is basic motif. The leucine-zipper stretch occupies residues 172–207 (LQDKLLESERNRQSLLKEIEELRKANTEINAENRLL).

It belongs to the bZIP family. YAP subfamily. Homodimer. Interacts with the C-terminal, cytoplasmic tail of the multidrug resistance ABC transporter PDR5.

Its subcellular location is the cytoplasm. It localises to the nucleus. Functionally, transcription activator involved in the regulation of genes expressed in response to environmental changes. When overexpressed it activates transcription of the multidrug resistance ABC transporter PDR5, thus conferring resistance to the fungicide fluconazole (FCZ) and cycloheximide. When overexpressed, it also confers, independent of PDR5, increased resistance to 4-nitroquinoline-N-oxide (4-NQO). Preferentially binds 5'-TTACTAA-3'. This chain is AP-1-like transcription factor YAP3 (YAP3), found in Saccharomyces cerevisiae (strain ATCC 204508 / S288c) (Baker's yeast).